The sequence spans 262 residues: Cytochrome c oxidase subunit 3 (262 aa).

6 consecutive transmembrane segments (helical) span residues 39–59 (YDIS…YQWW), 83–103 (GMIL…WAFF), 120–140 (MGII…ILLA), 163–183 (GLFF…YEYI), 198–218 (FFMA…FLLV), and 240–260 (AWYW…IYWW).

Belongs to the cytochrome c oxidase subunit 3 family. As to quaternary structure, component of the cytochrome c oxidase (complex IV, CIV), a multisubunit enzyme composed of a catalytic core of 3 subunits and several supernumerary subunits. The complex exists as a monomer or a dimer and forms supercomplexes (SCs) in the inner mitochondrial membrane with ubiquinol-cytochrome c oxidoreductase (cytochrome b-c1 complex, complex III, CIII).

Its subcellular location is the mitochondrion inner membrane. It carries out the reaction 4 Fe(II)-[cytochrome c] + O2 + 8 H(+)(in) = 4 Fe(III)-[cytochrome c] + 2 H2O + 4 H(+)(out). Its function is as follows. Component of the cytochrome c oxidase, the last enzyme in the mitochondrial electron transport chain which drives oxidative phosphorylation. The respiratory chain contains 3 multisubunit complexes succinate dehydrogenase (complex II, CII), ubiquinol-cytochrome c oxidoreductase (cytochrome b-c1 complex, complex III, CIII) and cytochrome c oxidase (complex IV, CIV), that cooperate to transfer electrons derived from NADH and succinate to molecular oxygen, creating an electrochemical gradient over the inner membrane that drives transmembrane transport and the ATP synthase. Cytochrome c oxidase is the component of the respiratory chain that catalyzes the reduction of oxygen to water. Electrons originating from reduced cytochrome c in the intermembrane space (IMS) are transferred via the dinuclear copper A center (CU(A)) of subunit 2 and heme A of subunit 1 to the active site in subunit 1, a binuclear center (BNC) formed by heme A3 and copper B (CU(B)). The BNC reduces molecular oxygen to 2 water molecules using 4 electrons from cytochrome c in the IMS and 4 protons from the mitochondrial matrix. This is Cytochrome c oxidase subunit 3 (mt:CoIII) from Drosophila melanogaster (Fruit fly).